Consider the following 186-residue polypeptide: GTP cyclohydrolase 1 1 (186 aa).

This sequence belongs to the GTP cyclohydrolase I family. Homomer.

It carries out the reaction GTP + H2O = 7,8-dihydroneopterin 3'-triphosphate + formate + H(+). The protein operates within cofactor biosynthesis; 7,8-dihydroneopterin triphosphate biosynthesis; 7,8-dihydroneopterin triphosphate from GTP: step 1/1. In Pseudomonas aeruginosa (strain ATCC 15692 / DSM 22644 / CIP 104116 / JCM 14847 / LMG 12228 / 1C / PRS 101 / PAO1), this protein is GTP cyclohydrolase 1 1 (folE1).